A 382-amino-acid chain; its full sequence is S-adenosylmethionine synthase (382 aa).

Histidine 16 is an ATP binding site. A Mg(2+)-binding site is contributed by aspartate 18. Residue glutamate 44 participates in K(+) binding. Glutamate 57 and glutamine 100 together coordinate L-methionine. A flexible loop region spans residues 100 to 110 (QSADIAIGVDE). ATP-binding positions include 165-167 (DAK), aspartate 240, 246-247 (RK), alanine 263, and lysine 267. Position 240 (aspartate 240) interacts with L-methionine. Lysine 271 contributes to the L-methionine binding site.

It belongs to the AdoMet synthase family. In terms of assembly, homotetramer; dimer of dimers. Requires Mg(2+) as cofactor. The cofactor is K(+).

Its subcellular location is the cytoplasm. It catalyses the reaction L-methionine + ATP + H2O = S-adenosyl-L-methionine + phosphate + diphosphate. Its pathway is amino-acid biosynthesis; S-adenosyl-L-methionine biosynthesis; S-adenosyl-L-methionine from L-methionine: step 1/1. Functionally, catalyzes the formation of S-adenosylmethionine (AdoMet) from methionine and ATP. The overall synthetic reaction is composed of two sequential steps, AdoMet formation and the subsequent tripolyphosphate hydrolysis which occurs prior to release of AdoMet from the enzyme. The protein is S-adenosylmethionine synthase of Alcanivorax borkumensis (strain ATCC 700651 / DSM 11573 / NCIMB 13689 / SK2).